Consider the following 693-residue polypeptide: Polyribonucleotide nucleotidyltransferase (693 aa).

The Mg(2+) site is built by D489 and D495. A KH domain is found at 556-615 (PQIHIMNVNPAKIKDVVGRGGSVVKGIVEKTGAQIDTSDSGEVKIFAKDKRSLDLAKSMV). The S1 motif domain occupies 625–693 (GQIYKGKIVK…GRVKLSLVAR (69 aa)).

This sequence belongs to the polyribonucleotide nucleotidyltransferase family. Component of the RNA degradosome, which is a multiprotein complex involved in RNA processing and mRNA degradation. The cofactor is Mg(2+).

The protein localises to the cytoplasm. The enzyme catalyses RNA(n+1) + phosphate = RNA(n) + a ribonucleoside 5'-diphosphate. Functionally, involved in mRNA degradation. Catalyzes the phosphorolysis of single-stranded polyribonucleotides processively in the 3'- to 5'-direction. The chain is Polyribonucleotide nucleotidyltransferase from Francisella philomiragia subsp. philomiragia (strain ATCC 25017 / CCUG 19701 / FSC 153 / O#319-036).